The chain runs to 392 residues: V-type proton ATPase subunit C (392 aa).

A2 carries the N-acetylalanine modification.

The protein belongs to the V-ATPase C subunit family. As to quaternary structure, V-ATPase is a heteromultimeric enzyme composed of a peripheral catalytic V1 complex (components A to H) attached to an integral membrane V0 proton pore complex (components: a, c, c', c'', d, e, f and VOA1). Interacts directly with VMA4.

It is found in the vacuole membrane. In terms of biological role, subunit of the V1 complex of vacuolar(H+)-ATPase (V-ATPase), a multisubunit enzyme composed of a peripheral complex (V1) that hydrolyzes ATP and a membrane integral complex (V0) that translocates protons. V-ATPase is responsible for acidifying and maintaining the pH of intracellular compartments. Subunit C is necessary for the assembly of the catalytic sector of the enzyme and is likely to have a specific function in its catalytic activity. Reversibly leaves the enzyme after glucose depletion, causing the catalytic subcomplex V1 to detach from the V0 section. The polypeptide is V-type proton ATPase subunit C (Saccharomyces cerevisiae (strain ATCC 204508 / S288c) (Baker's yeast)).